The sequence spans 645 residues: Cytochrome c oxidase subunit 1 (645 aa).

Residues 8-28 traverse the membrane as a helical segment; the sequence is LNYFYFSMWTGLSGAALATMI. Ca(2+) contacts are provided by Glu-31 and Gly-36. Residue His-54 coordinates Fe(II)-heme a. Helical transmembrane passes span 56–76, 90–110, 247–267, 282–302, 337–357, 376–396, 410–430, and 438–458; these read LIMVFFVVVPIFFGGFANFLI, LNSIGFWIQPLGFLLVAKIAF, VLSVAVVLAGISTTISLLTLI, VLIPFITISLLLTLRLLAIVT, LFWFFGHPEVYILIIPSFGVA, IWAVYVMAYMGFVVWGHHMYL, ITIMICLPATIKLVNWTLTLA, and LVFLFFCSYVFFFLTGGFTGM. Residue His-343 participates in Cu cation binding. The segment at residues 343–347 is a cross-link (1'-histidyl-3'-tyrosine (His-Tyr)); sequence HPEVY. Tyr-347 lines the O2 pocket. Residues His-392 and His-393 each coordinate Cu cation. Residues His-470 and Asp-471 each contribute to the Mg(2+) site. 3 helical membrane passes run 475 to 495, 513 to 533, and 555 to 575; these read VVAHFHLMLAGAAMMGAFTGL, FLHLVYYSAGIWTTFFPMFFL, and LASCGHFLTLAGVCFFFFGIF. Heme a3 is bound at residue His-478. Residue His-480 coordinates Fe(II)-heme a.

It belongs to the heme-copper respiratory oxidase family. As to quaternary structure, component of the cytochrome c oxidase (complex IV, CIV), a multisubunit enzyme composed of a catalytic core of 3 subunits and several supernumerary subunits. The complex exists as a monomer or a dimer and forms supercomplexes (SCs) in the inner mitochondrial membrane with ubiquinol-cytochrome c oxidoreductase (cytochrome b-c1 complex, complex III, CIII). Requires heme as cofactor. The cofactor is Cu cation.

Its subcellular location is the mitochondrion inner membrane. It carries out the reaction 4 Fe(II)-[cytochrome c] + O2 + 8 H(+)(in) = 4 Fe(III)-[cytochrome c] + 2 H2O + 4 H(+)(out). It functions in the pathway energy metabolism; oxidative phosphorylation. In terms of biological role, component of the cytochrome c oxidase, the last enzyme in the mitochondrial electron transport chain which drives oxidative phosphorylation. The respiratory chain contains 3 multisubunit complexes succinate dehydrogenase (complex II, CII), ubiquinol-cytochrome c oxidoreductase (cytochrome b-c1 complex, complex III, CIII) and cytochrome c oxidase (complex IV, CIV), that cooperate to transfer electrons derived from NADH and succinate to molecular oxygen, creating an electrochemical gradient over the inner membrane that drives transmembrane transport and the ATP synthase. Cytochrome c oxidase is the component of the respiratory chain that catalyzes the reduction of oxygen to water. Electrons originating from reduced cytochrome c in the intermembrane space (IMS) are transferred via the dinuclear copper A center (CU(A)) of subunit 2 and heme A of subunit 1 to the active site in subunit 1, a binuclear center (BNC) formed by heme A3 and copper B (CU(B)). The BNC reduces molecular oxygen to 2 water molecules using 4 electrons from cytochrome c in the IMS and 4 protons from the mitochondrial matrix. The polypeptide is Cytochrome c oxidase subunit 1 (COI) (Paramecium tetraurelia).